The primary structure comprises 190 residues: Protein GrpE (190 aa).

A compositionally biased stretch (polar residues) spans 1–31 (MTETPNTSSEEIQTSEPSSDNELQTLQQENA). Residues 1-34 (MTETPNTSSEEIQTSEPSSDNELQTLQQENANLK) are disordered.

Belongs to the GrpE family. Homodimer.

Its subcellular location is the cytoplasm. In terms of biological role, participates actively in the response to hyperosmotic and heat shock by preventing the aggregation of stress-denatured proteins, in association with DnaK and GrpE. It is the nucleotide exchange factor for DnaK and may function as a thermosensor. Unfolded proteins bind initially to DnaJ; upon interaction with the DnaJ-bound protein, DnaK hydrolyzes its bound ATP, resulting in the formation of a stable complex. GrpE releases ADP from DnaK; ATP binding to DnaK triggers the release of the substrate protein, thus completing the reaction cycle. Several rounds of ATP-dependent interactions between DnaJ, DnaK and GrpE are required for fully efficient folding. The protein is Protein GrpE of Chlamydia muridarum (strain MoPn / Nigg).